The chain runs to 278 residues: 4-deoxy-L-threo-5-hexosulose-uronate ketol-isomerase (278 aa).

Zn(2+) contacts are provided by histidine 196, histidine 198, glutamate 203, and histidine 245.

It belongs to the KduI family. In terms of assembly, homohexamer. Zn(2+) is required as a cofactor.

The enzyme catalyses 5-dehydro-4-deoxy-D-glucuronate = 3-deoxy-D-glycero-2,5-hexodiulosonate. The protein operates within glycan metabolism; pectin degradation; 2-dehydro-3-deoxy-D-gluconate from pectin: step 4/5. Functionally, catalyzes the isomerization of 5-dehydro-4-deoxy-D-glucuronate to 3-deoxy-D-glycero-2,5-hexodiulosonate. The sequence is that of 4-deoxy-L-threo-5-hexosulose-uronate ketol-isomerase from Escherichia coli (strain UTI89 / UPEC).